Here is a 177-residue protein sequence, read N- to C-terminus: Large ribosomal subunit protein uL6 (177 aa).

It belongs to the universal ribosomal protein uL6 family. Part of the 50S ribosomal subunit.

In terms of biological role, this protein binds to the 23S rRNA, and is important in its secondary structure. It is located near the subunit interface in the base of the L7/L12 stalk, and near the tRNA binding site of the peptidyltransferase center. The polypeptide is Large ribosomal subunit protein uL6 (Methanothermobacter thermautotrophicus (strain ATCC 29096 / DSM 1053 / JCM 10044 / NBRC 100330 / Delta H) (Methanobacterium thermoautotrophicum)).